We begin with the raw amino-acid sequence, 57 residues long: Large ribosomal subunit protein bL32 (57 aa).

A compositionally biased stretch (basic residues) spans 1-20 (MAVPKRRMSRSNTRSRRAQW). Positions 1-22 (MAVPKRRMSRSNTRSRRAQWKA) are disordered.

The protein belongs to the bacterial ribosomal protein bL32 family.

This Mycobacterium sp. (strain JLS) protein is Large ribosomal subunit protein bL32.